Consider the following 240-residue polypeptide: Enoyl-CoA delta isomerase 1, peroxisomal (240 aa).

The short motif at 238 to 240 (SKL) is the Microbody targeting signal element.

Belongs to the enoyl-CoA hydratase/isomerase family.

The protein localises to the peroxisome. It carries out the reaction a (3Z)-enoyl-CoA = a 4-saturated (2E)-enoyl-CoA. The enzyme catalyses a (3E)-enoyl-CoA = a 4-saturated (2E)-enoyl-CoA. It participates in lipid metabolism; fatty acid beta-oxidation. Able to isomerize both 3-cis and 3-trans double bonds into the 2-trans form in a range of enoyl-CoA species. Essential for the beta oxidation of unsaturated fatty acids. This is Enoyl-CoA delta isomerase 1, peroxisomal from Arabidopsis thaliana (Mouse-ear cress).